The primary structure comprises 149 residues: MADIIKLHDLRPAAGSNKPKTRVGRGEASKGKTAGRGTKGTGARKQVPAAFEGGQMPIHMRLPKLKGFKNPNHVEYQVVNVADLAEAFANGGDVTVADIVAAGLVRKNQPVKVLGNGEINVKLNVTADKFSKSAVEKIEAAGGTATATK.

A disordered region spans residues 8–49 (HDLRPAAGSNKPKTRVGRGEASKGKTAGRGTKGTGARKQVPA). Positions 31 to 45 (GKTAGRGTKGTGARK) are enriched in low complexity.

It belongs to the universal ribosomal protein uL15 family. As to quaternary structure, part of the 50S ribosomal subunit.

Functionally, binds to the 23S rRNA. The chain is Large ribosomal subunit protein uL15 from Corynebacterium aurimucosum (strain ATCC 700975 / DSM 44827 / CIP 107346 / CN-1) (Corynebacterium nigricans).